Here is a 598-residue protein sequence, read N- to C-terminus: Elongation factor 4 (598 aa).

The 183-residue stretch at Lys2–Glu184 folds into the tr-type G domain. GTP is bound by residues Asp14 to Thr19 and Asn131 to Asp134.

Belongs to the TRAFAC class translation factor GTPase superfamily. Classic translation factor GTPase family. LepA subfamily.

The protein localises to the cell inner membrane. The catalysed reaction is GTP + H2O = GDP + phosphate + H(+). Its function is as follows. Required for accurate and efficient protein synthesis under certain stress conditions. May act as a fidelity factor of the translation reaction, by catalyzing a one-codon backward translocation of tRNAs on improperly translocated ribosomes. Back-translocation proceeds from a post-translocation (POST) complex to a pre-translocation (PRE) complex, thus giving elongation factor G a second chance to translocate the tRNAs correctly. Binds to ribosomes in a GTP-dependent manner. In Histophilus somni (strain 2336) (Haemophilus somnus), this protein is Elongation factor 4.